Here is a 266-residue protein sequence, read N- to C-terminus: Methyl-coenzyme M reductase II subunit gamma (266 aa).

R123 is a coenzyme M binding site.

It belongs to the methyl-coenzyme M reductase gamma subunit family. As to quaternary structure, MCR is a hexamer of two alpha, two beta, and two gamma chains, forming a dimer of heterotrimers. Coenzyme F430 serves as cofactor.

The catalysed reaction is coenzyme B + methyl-coenzyme M = methane + coenzyme M-coenzyme B heterodisulfide. It functions in the pathway one-carbon metabolism; methyl-coenzyme M reduction; methane from methyl-coenzyme M: step 1/1. Component of the methyl-coenzyme M reductase (MCR) I that catalyzes the reductive cleavage of methyl-coenzyme M (CoM-S-CH3 or 2-(methylthio)ethanesulfonate) using coenzyme B (CoB or 7-mercaptoheptanoylthreonine phosphate) as reductant which results in the production of methane and the mixed heterodisulfide of CoB and CoM (CoM-S-S-CoB). This is the final step in methanogenesis. This Methanocaldococcus jannaschii (strain ATCC 43067 / DSM 2661 / JAL-1 / JCM 10045 / NBRC 100440) (Methanococcus jannaschii) protein is Methyl-coenzyme M reductase II subunit gamma (mrtG).